Here is a 552-residue protein sequence, read N- to C-terminus: Urocanate hydratase (552 aa).

Residues 49–50, glutamine 127, 173–175, aspartate 193, 239–240, 260–264, 270–271, and tyrosine 319 each bind NAD(+); these read GG, GMG, NA, QTSAH, and YI. The active site involves cysteine 407. Residue glycine 489 coordinates NAD(+).

It belongs to the urocanase family. Requires NAD(+) as cofactor.

Its subcellular location is the cytoplasm. The catalysed reaction is 4-imidazolone-5-propanoate = trans-urocanate + H2O. Its pathway is amino-acid degradation; L-histidine degradation into L-glutamate; N-formimidoyl-L-glutamate from L-histidine: step 2/3. Its function is as follows. Catalyzes the conversion of urocanate to 4-imidazolone-5-propionate. The polypeptide is Urocanate hydratase (Bacillus thuringiensis (strain Al Hakam)).